A 389-amino-acid chain; its full sequence is viridiflorene synthase Agr2 (389 aa).

A signal peptide spans 1-15 (MVWDFVLSLFHSLLA). Residues Asp-128, Asn-263, Ser-267, and Glu-271 each contribute to the Mg(2+) site. A DDXXD motif motif is present at residues 128-132 (DEVTD). (2E,6E)-farnesyl diphosphate contacts are provided by Arg-360 and Tyr-361.

Belongs to the terpene synthase family. Mg(2+) is required as a cofactor.

It catalyses the reaction (2E,6E)-farnesyl diphosphate = viridiflorene + diphosphate. Its function is as follows. Terpene cyclase that catalyzes the cyclization of farnesyl diphosphate (FPP) to viridiflorene. The chain is viridiflorene synthase Agr2 from Cyclocybe aegerita (Black poplar mushroom).